The chain runs to 61 residues: MAKKSMINKANAPQKFTVRGHNRCKLCGRPHGYMRKFGICRICFRELAYRGEIPGVKKASW.

Zn(2+) is bound by residues Cys-24, Cys-27, Cys-40, and Cys-43.

Belongs to the universal ribosomal protein uS14 family. Zinc-binding uS14 subfamily. In terms of assembly, part of the 30S ribosomal subunit. Contacts proteins S3 and S10. Zn(2+) serves as cofactor.

In terms of biological role, binds 16S rRNA, required for the assembly of 30S particles and may also be responsible for determining the conformation of the 16S rRNA at the A site. The chain is Small ribosomal subunit protein uS14 from Desulforamulus reducens (strain ATCC BAA-1160 / DSM 100696 / MI-1) (Desulfotomaculum reducens).